A 33-amino-acid polypeptide reads, in one-letter code: Ice-structuring protein SS-3 (33 aa).

Belongs to the type-I AFP family.

Functionally, antifreeze proteins lower the blood freezing point. The polypeptide is Ice-structuring protein SS-3 (Myoxocephalus scorpius (Shorthorn sculpin)).